The chain runs to 519 residues: MSWAPVSTWSRRTPLAACCSAPELPPAGAWKACAAGSLRIGPQGRCKMMKNWGMIGGIAAALAAGIYVLWGPISDRKKYRKGLVPGLLNLGNTCFMNSLLQGLASCPSFIRWLADFTSKYRQENNTTEHQHLSVTLLHLLKALCNQEGTEDEVLDASPLLEVLRAHRWQISSFEEQDAHELFHVLTSSLEDERDRRPHVTHLFDLDSLEFPLEPQRQIHCRTQVPIYPIPSQWKSQHPFHGRLTSNMVCKHCQHQSPMRYDTFDSLSLSIPVATWGHPITLDQCLQHFISTESVKDVVCENCTKIHAAQIPNSQSVENRKTTFVKQLKLGKLPQCLCIHLQRLSWSNQGSPLKRNEHVQFSEFLAMDRFKYRISGCSTSKQPANHLSAAEQETTDGKEGGAQNPTMPFLNGACSTSYISPPFTSPLPTNPEWTSSSYLFRLMAVVVHHGDMHSGHFVTYRRSPAAKNQKLTSQQWLWISDDTVRRTNFQEVLSSSAYLLFYERIQSNLHHPEDQRAAEK.

The Mitochondrial intermembrane segment spans residues 1–52 (MSWAPVSTWSRRTPLAACCSAPELPPAGAWKACAAGSLRIGPQGRCKMMKNW). The chain crosses the membrane as a helical span at residues 53-73 (GMIGGIAAALAAGIYVLWGPI). Topologically, residues 74-519 (SDRKKYRKGL…HPEDQRAAEK (446 aa)) are cytoplasmic. One can recognise a USP domain in the interval 85–504 (PGLLNLGNTC…SAYLLFYERI (420 aa)). C94 functions as the Nucleophile in the catalytic mechanism. The disordered stretch occupies residues 379 to 405 (SKQPANHLSAAEQETTDGKEGGAQNPT). The active-site Proton acceptor is the H455.

The protein belongs to the peptidase C19 family.

Its subcellular location is the mitochondrion outer membrane. The catalysed reaction is Thiol-dependent hydrolysis of ester, thioester, amide, peptide and isopeptide bonds formed by the C-terminal Gly of ubiquitin (a 76-residue protein attached to proteins as an intracellular targeting signal).. Deubiquitinating enzyme that acts as a key inhibitor of mitophagy by counteracting the action of parkin (PRKN). This chain is Ubiquitin carboxyl-terminal hydrolase 30 (usp30), found in Xenopus tropicalis (Western clawed frog).